We begin with the raw amino-acid sequence, 135 residues long: MAGRGKAIGAGAAKKATSRSSKAGLQFPVGRIARFLKAGKYAERVGAGAPVYLAAVLEYLAAEVLELAGNAARDNKKTRIVPRHIQLAVRNDEELTKLLGGATIASGGVMPNIHQHLLPKKAGSSKASTVDDDDN.

This sequence belongs to the histone H2A family. In terms of assembly, the nucleosome is a histone octamer containing two molecules each of H2A, H2B, H3 and H4 assembled in one H3-H4 heterotetramer and two H2A-H2B heterodimers. The octamer wraps approximately 147 bp of DNA.

The protein localises to the nucleus. The protein resides in the chromosome. Functionally, core component of nucleosome. Nucleosomes wrap and compact DNA into chromatin, limiting DNA accessibility to the cellular machineries which require DNA as a template. Histones thereby play a central role in transcription regulation, DNA repair, DNA replication and chromosomal stability. DNA accessibility is regulated via a complex set of post-translational modifications of histones, also called histone code, and nucleosome remodeling. The chain is Probable histone H2A.1 from Oryza sativa subsp. japonica (Rice).